Here is a 195-residue protein sequence, read N- to C-terminus: Thymidylate kinase (195 aa).

Position 7 to 14 (7 to 14) interacts with ATP; sequence GIDGVGKS.

This sequence belongs to the thymidylate kinase family.

It catalyses the reaction dTMP + ATP = dTDP + ADP. In terms of biological role, phosphorylation of dTMP to form dTDP in both de novo and salvage pathways of dTTP synthesis. This chain is Thymidylate kinase, found in Campylobacter hominis (strain ATCC BAA-381 / DSM 21671 / CCUG 45161 / LMG 19568 / NCTC 13146 / CH001A).